Reading from the N-terminus, the 254-residue chain is 3-deoxy-manno-octulosonate cytidylyltransferase (254 aa).

It belongs to the KdsB family.

The protein localises to the cytoplasm. The enzyme catalyses 3-deoxy-alpha-D-manno-oct-2-ulosonate + CTP = CMP-3-deoxy-beta-D-manno-octulosonate + diphosphate. The protein operates within nucleotide-sugar biosynthesis; CMP-3-deoxy-D-manno-octulosonate biosynthesis; CMP-3-deoxy-D-manno-octulosonate from 3-deoxy-D-manno-octulosonate and CTP: step 1/1. It functions in the pathway bacterial outer membrane biogenesis; lipopolysaccharide biosynthesis. In terms of biological role, activates KDO (a required 8-carbon sugar) for incorporation into bacterial lipopolysaccharide in Gram-negative bacteria. In Pseudomonas putida (strain GB-1), this protein is 3-deoxy-manno-octulosonate cytidylyltransferase.